The sequence spans 3649 residues: MTSARHLKSAADWCARIDAIAGQRCDLEMLLKDEWRHRVAVRDSDTAVRATQEKELTISGQDYTALKQALGAMPLEAFALATLHSVLHAYGHGHQTVVAFLRDGKVLPVVVDHLEQAGLTCAEAAEQLEDAVAREDMYLPPEELLQRGLFDALLVLADGHLGFTELPPAPLVTIVRDDPAAGCLHWRIAYAGEFFEDKIIAGVLDVAREVLGQFIGRPEQLVADIDLVSAEQELQLHQWNGTDGEFDEDKRLNELFEDVVRRAPDREAVVCGDVRLTYREVNERANQFAHWLIQGPVRVRPGALIGLYLDKSDLGVVATFGIWKSGAAYVPIDPAYPAERIRFLVGDTGLSGIVTNRRHAERLREVLGDEHASVHVIEVEAVVAGPHPEQARENPGLALSSRDRAYVTYTSGTTGVPKGVPKYHYSVVNSITDLSERYDMRRPGTERVALFASYVFEPHLRQTLIALINEQTLVIVPDDVRLDPDLFPEYIERHGVTYLNATGSVLQHFDLRRCASLKRLLLVGEELTASGLRQLREKFAGRVVNEYAFTEAAFVTAVKEFGPGVTERRDRSIGRPLRNVKWYVLSQGLKQLPIGAIGELYIGGCGVAPGYLNRDDLTAERFTANPFQTEEEKARGRNGRLYRTGDLARVLLNGEVEFMGRADFQLKLNGVRVEPGEIEAQATEFPGVKKCVVVAKENATGDRHLVGYYLVEDGAEVAEADLIAFLEQRLIRIMVPARMVRLTSIPVNVNGKVDWRALPDVSLHPAPANAMNGALLAIDGSNAPLLAITEQLRAIWSEVLGVPQNRIGERDDFFRLGGQSISCILLIARVRQRLSLSLGVEDVFALRTLDALAGHLESQGHAEPEVVAEEVTTGSEPVRVLANGLQQGLLYHHLKTAGGDDAYVVQSVHRYHAPIRPELMKDAWQAARQTYPALRLRFDWAEEPVQIVDNDDKPFDWRFVDLSATADDAEQEARVRELQERDRTEPYDLAGGRLFRVYLIKQREDLFSLIFSCHHIILDGWSLPVLHDEVHRNYLALRAGQPIESDVDNAYVAAQRYWEAHRNDHAAYWVEQLGRIDERGDFAGLLNEKSRYRVSLGDYDHVQRHRTRKLYLGADLTGALKAGCAADQVTLHSVLQFVWHKVLHAIGGGNTTVVGTIVSGRNLPVDGIENSAGLFINTLPLIVDHDQQAGQNVAEAVRDIQAAVNTMNSKSIVELGRLQSGEMKRRLFDTLLVLENYPRLLDEEEELAHQEALRFEKAYDADKVDYPIAVVAREEGDELTVTLWYAGELFDEDTIDTLLDVARTLFRQVTEDIARPVRELDLISPSMRARFDSWNETAEEFPADKTLHAVFEEMAERWPDEIAVVYRENRLTYRELNERANRLAHYLRSVVELRPDDLVALVLDKSELMITAIIAAWKTGAAYVPIDSGYPDDRISFMLSDTAARVVVTNEIHSDRLRSLAETGTPVLEIELLHLDDQPAVNPVTETTSTDLAYAIYTSGTTGKPKAVLVEHRGVVNLQVSLAKLFGLDKAHRDEALLSFSNYIFDHFVEQMTDALLNGQKLVVLDDSMRTDPGRLCRYMNDEQVTYLSGTPSVLSLYDYSSATSLTRIDAIGEDFTEPVFAKIRGTFPGLIINGYGPTEISITSHKRPYPPDVHRVNKSIGFPVANTKCHVLNKAMKPVPVGGIGELYIGGIGVTRGYLNREDLTADRFVENPFQTAEERRLGENGRLYKTGDLVRWLPNGEVEYLGRTDLQVKIRGQRVELGEVEAALSSYPGVVRSLVVAREHAVGQKYLVGFYVGEQEFDEQDLKQWMRKKLPESVVPARVLRITDIPVTPSGKLDARRLPETDFGAGEGAEYVAPVSEFELKLCGIWAQVLEIAPDRIGVHDDFFALGGDSIRAMALAQAITTGFGQGLGVATVLQHTTLAAQAEHIQAAALEHTAWTPPPTAVEHPPVSLAQERLLFIDDFEGGTAAYNIPFVLRLPAHTRAALPGALGTLVRRHPALRTLLKTDDQGVRRQYPIPADDVRLEVPSTTVDSRAELDEVLTERAGYVFRLHEELPIRAEAFDHGDEIYLSVVVHHSCFDGWSWDIFRRELAALLDGVPEADLGALRGTYGEFAVWQRQYLTGKRLAALTEFWTGALGGFETIALPLDHPRPPRFDYRGRELEFELDERTTEALRELARTARVSLYSVLLGAWCLMLNMYTGQHDLVVGTPSANRGRPEFDRAVGFFANLLALRVRVDPAATLPAYVRSVGEAVVAAQVHGELPFEQLVKELKVEKDPSRHPILQLNFTLQNVSDHTSALTGYQPDSGGWTTTKFDLSATMTETATGLAGNLTYAASLFDDTSASGFIATFKHVLAEFASAAAQTPIAQLTALDEPGQAALPDATRRARRPGGPGRCTRLFEEVAATWPDRVAVVHGDVRLTYRELNERANRLAHHLRSVAEPRADELIALVLDKSELTLVAILAVWKAGAAYMPIDPSYPDDRIAFMLSDTGAKLVLAGEAHGSRVRGLTSGDVLDLEQLDLTGEPAENPVTETTSTELAYAIYTSGTTGKPKAVLVSHGSVDSFRAQLSGRYFGSPDESAEAVLFLANYVFDFSVEQLALSVLGGHKLLVPPPSAADDPAFYELANREGLSYLSGTPTQVERFDLARLSHLRCVLVAGEAFQPQHFEKMRGEFAGPILNAYGTTETTVYNTVHRFEPGDAYRNTLGAPLGNTRLYVLGDGMKLLPTGAVGELYLAGDCVTEGYLHRPELTRERFLPNPFAAESGRFPMIYRTGDVVRRGPDGELQYLGRNDAQVKINGLRIEPGEVEAALAGCSGVRQCAVVAGADPQAPERKRLVGYYLPEPGAAVDEADLFAALRAQLMPSMVPSLLVRLDRPLPMTITGKLDVDALPSADFSPKRAAYAAPRDRVEARLCHLWSAQLPGGTVGIDDDFFRCGGDSISALHLASQVQREIERKVSVKYLFDHPTVRSFVDNVLSGLAESSGDDEPEQGRLTGECPMLPIQEWFFAKPLADRHRWNHNFAIRTPPLDPGELRTALDRLVEHHDAFRLRFPESGGEVYAEDAAPITLHELDVRGLADADLRQRLVDWQRTFDLANGPTACAAYLHGFDDGTARVWFALHHLVVDTVSWHILAQDLEILYNGGDLGAKTGSYRQWAQAVRDYTPAEGEREFWAETTRDMESAELLAQTEGTTRRREEFALTAPDTRTLLAESPWAYDTEVNDLLLTATGFALRSITRQATNHLTVEGHGRELFEGAPDVRDTVGWFTTMHPFAVEVDPGDLGRSVLATRANRRRVPHHGIGYGALFGGEAPLPAVSFNYLGRLGEGDGQPTEAWQLDPALSGSHTVDGNRLANRSSIDVTMSCTGGRLVAVVDSLLGEAATRLFASELKVWLERLVSHTATVARNEPAREATTELFDPYILVNEDAERTLFVLPPGEGGAESYLSNLARQLPDLRLVLFNNVHLHTPMGSFEELGRYYVEHIRRLQPSGPYHLLGWSFGGVLSLEISRQLARAGERIDDLLLIDPYFGMRQASANIGLPGVEDILDPINYHYRPDEADLARLAGRLGNLVLFKAGEPNDVVNGPHQPRLFEYYHGTRFNHLDLLLPAAAIEVCDLAGETHHSWVRNEKLVRLMCERISTSLGSD.

The interval 401 to 861 (SRDRAYVTYT…LAGHLESQGH (461 aa)) is domain 1 (adipate-activating). Carrier domains lie at 783 to 860 (APLL…ESQG), 1859 to 1936 (APVS…QAAA), and 2909 to 2984 (APRD…LSGL). O-(pantetheine 4'-phosphoryl)serine is present on residues serine 820, serine 1896, and serine 2944. The tract at residues 1014–1937 (HHIILDGWSL…QAEHIQAAAL (924 aa)) is domain 2 (cysteine-activating). The domain 3 (valine-activating) stretch occupies residues 2079 to 2985 (HHSCFDGWSW…FVDNVLSGLA (907 aa)). Serine 3502 (for thioesterase activity) is an active-site residue.

Belongs to the ATP-dependent AMP-binding enzyme family. The cofactor is pantetheine 4'-phosphate.

It catalyses the reaction L-2-aminoadipate + L-valine + L-cysteine + 3 ATP + H2O = N-[(5S)-5-amino-5-carboxypentanoyl]-L-cysteinyl-D-valine + 3 AMP + 3 diphosphate + 3 H(+). Its pathway is antibiotic biosynthesis; penicillin G biosynthesis; penicillin G from L-alpha-aminoadipate and L-cysteine and L-valine: step 1/3. Its function is as follows. Each of the constituent amino acids of the tripeptide acv are activated as aminoacyl-adenylates with peptide bonds formed through the participation of amino acid thioester intermediates. This chain is N-(5-amino-5-carboxypentanoyl)-L-cysteinyl-D-valine synthase (pcbAB), found in Amycolatopsis lactamdurans (Nocardia lactamdurans).